Reading from the N-terminus, the 413-residue chain is Serine hydroxymethyltransferase (413 aa).

(6S)-5,6,7,8-tetrahydrofolate contacts are provided by residues L120 and 124–126 (GHL). N6-(pyridoxal phosphate)lysine is present on K229. 352–354 (SPF) contributes to the (6S)-5,6,7,8-tetrahydrofolate binding site.

It belongs to the SHMT family. In terms of assembly, homodimer. Requires pyridoxal 5'-phosphate as cofactor.

The protein resides in the cytoplasm. The enzyme catalyses (6R)-5,10-methylene-5,6,7,8-tetrahydrofolate + glycine + H2O = (6S)-5,6,7,8-tetrahydrofolate + L-serine. The protein operates within one-carbon metabolism; tetrahydrofolate interconversion. Its pathway is amino-acid biosynthesis; glycine biosynthesis; glycine from L-serine: step 1/1. In terms of biological role, catalyzes the reversible interconversion of serine and glycine with tetrahydrofolate (THF) serving as the one-carbon carrier. This reaction serves as the major source of one-carbon groups required for the biosynthesis of purines, thymidylate, methionine, and other important biomolecules. Also exhibits THF-independent aldolase activity toward beta-hydroxyamino acids, producing glycine and aldehydes, via a retro-aldol mechanism. The sequence is that of Serine hydroxymethyltransferase from Heliobacterium modesticaldum (strain ATCC 51547 / Ice1).